A 77-amino-acid polypeptide reads, in one-letter code: uncharacterized protein (77 aa).

An Inhibitor I9 domain is found at 5–74 (SYIVQLKDSV…FEPDQEMHTM (70 aa)).

Belongs to the protease inhibitor I9 family.

Its subcellular location is the cytoplasm. The protein localises to the nucleus. This is an uncharacterized protein from Schizosaccharomyces pombe (strain 972 / ATCC 24843) (Fission yeast).